The chain runs to 131 residues: Translation initiation factor 5A (131 aa).

Lys36 is modified (hypusine).

This sequence belongs to the eIF-5A family.

It localises to the cytoplasm. Functionally, functions by promoting the formation of the first peptide bond. This chain is Translation initiation factor 5A (eIF5A), found in Saccharolobus islandicus (strain Y.N.15.51 / Yellowstone #2) (Sulfolobus islandicus).